The sequence spans 106 residues: Movement protein TGB2 (106 aa).

The Cytoplasmic segment spans residues 1–9 (MPLTPPPDH). Residues 10–30 (TKVLLVAAIGLSIVASILTYS) traverse the membrane as a helical segment. Topologically, residues 31–71 (RNTLPQVGDHSHLLPHGGVYKDGTKTIVYGGPRKLNSLEGG) are lumenal. A helical membrane pass occupies residues 72 to 92 (FNLPVQPWFLVILLSAAIFLL). Residues 93-106 (SCRSGHRRVCGQCH) are Cytoplasmic-facing.

Belongs to the Tymovirales TGBp2 protein family.

The protein localises to the host endoplasmic reticulum membrane. Its function is as follows. Plays a role in viral cell-to-cell propagation, by facilitating genome transport to neighboring plant cells through plasmosdesmata,. In Chrysanthemum morifolium (Florist's daisy), this protein is Movement protein TGB2.